The chain runs to 312 residues: DNA-directed RNA polymerase subunit alpha (312 aa).

Positions 1-226 (MIEFEKPNIT…EHLNLFTNLT (226 aa)) are alpha N-terminal domain (alpha-NTD). Residues 243 to 312 (DDRILERTIE…DLGLGLKNDK (70 aa)) are alpha C-terminal domain (alpha-CTD).

The protein belongs to the RNA polymerase alpha chain family. As to quaternary structure, homodimer. The RNAP catalytic core consists of 2 alpha, 1 beta, 1 beta' and 1 omega subunit. When a sigma factor is associated with the core the holoenzyme is formed, which can initiate transcription.

It catalyses the reaction RNA(n) + a ribonucleoside 5'-triphosphate = RNA(n+1) + diphosphate. In terms of biological role, DNA-dependent RNA polymerase catalyzes the transcription of DNA into RNA using the four ribonucleoside triphosphates as substrates. This Streptococcus sanguinis (strain SK36) protein is DNA-directed RNA polymerase subunit alpha.